Reading from the N-terminus, the 332-residue chain is HPr kinase/phosphorylase (332 aa).

Catalysis depends on residues His153 and Lys174. 168-175 (GKSGLGKS) is a binding site for ATP. Mg(2+) is bound at residue Ser175. Residue Asp192 is the Proton acceptor; for phosphorylation activity. Proton donor; for dephosphorylation activity of the active site. The tract at residues 217 to 226 (MEIRGLGVVD) is important for the catalytic mechanism of both phosphorylation and dephosphorylation. Glu218 provides a ligand contact to Mg(2+). Arg259 is a catalytic residue. Residues 280–285 (PIFPGK) are important for the catalytic mechanism of dephosphorylation.

It belongs to the HPrK/P family. In terms of assembly, homohexamer. It depends on Mg(2+) as a cofactor.

The enzyme catalyses [HPr protein]-L-serine + ATP = [HPr protein]-O-phospho-L-serine + ADP + H(+). The catalysed reaction is [HPr protein]-O-phospho-L-serine + phosphate + H(+) = [HPr protein]-L-serine + diphosphate. Catalyzes the ATP- as well as the pyrophosphate-dependent phosphorylation of a specific serine residue in HPr, a phosphocarrier protein of the phosphoenolpyruvate-dependent sugar phosphotransferase system (PTS). HprK/P also catalyzes the pyrophosphate-producing, inorganic phosphate-dependent dephosphorylation (phosphorolysis) of seryl-phosphorylated HPr (P-Ser-HPr). The polypeptide is HPr kinase/phosphorylase (Chlorobium phaeovibrioides (strain DSM 265 / 1930) (Prosthecochloris vibrioformis (strain DSM 265))).